The primary structure comprises 194 residues: ATP-dependent Clp protease proteolytic subunit 3 (194 aa).

Ser96 acts as the Nucleophile in catalysis. Residue His121 is part of the active site.

The protein belongs to the peptidase S14 family. Fourteen ClpP subunits assemble into 2 heptameric rings which stack back to back to give a disk-like structure with a central cavity, resembling the structure of eukaryotic proteasomes.

The protein localises to the cytoplasm. It catalyses the reaction Hydrolysis of proteins to small peptides in the presence of ATP and magnesium. alpha-casein is the usual test substrate. In the absence of ATP, only oligopeptides shorter than five residues are hydrolyzed (such as succinyl-Leu-Tyr-|-NHMec, and Leu-Tyr-Leu-|-Tyr-Trp, in which cleavage of the -Tyr-|-Leu- and -Tyr-|-Trp bonds also occurs).. In terms of biological role, cleaves peptides in various proteins in a process that requires ATP hydrolysis. Has a chymotrypsin-like activity. Plays a major role in the degradation of misfolded proteins. The polypeptide is ATP-dependent Clp protease proteolytic subunit 3 (Prochlorococcus marinus (strain NATL2A)).